Consider the following 530-residue polypeptide: Vesicular acetylcholine transporter (530 aa).

Residues 1 to 33 lie on the Cytoplasmic side of the membrane; that stretch reads MEPTAPTGQARAAATKLSEAVGAALQEPQRQRR. The chain crosses the membrane as a helical span at residues 34-54; that stretch reads LVLVIVCVALLLDNMLYMVIV. Over 55–125 the chain is Lumenal, vesicle; it reads PIVPDYIAHM…PTESEDVKIG (71 aa). 2 N-linked (GlcNAc...) asparagine glycosylation sites follow: Asn89 and Asn96. The helical transmembrane segment at 126–146 threads the bilayer; sequence VLFASKAILQLLVNPLSGPFI. Over 147-152 the chain is Cytoplasmic; it reads DRMSYD. A helical membrane pass occupies residues 153 to 173; the sequence is VPLLIGLGVMFASTVMFAFAE. The Lumenal, vesicle portion of the chain corresponds to 174-182; it reads DYATLFAAR. The chain crosses the membrane as a helical span at residues 183–203; that stretch reads SLQGLGSAFADTSGIAMIADK. Residues 204-213 lie on the Cytoplasmic side of the membrane; that stretch reads YPEEPERSRA. The chain crosses the membrane as a helical span at residues 214–234; sequence LGVALAFISFGSLVAPPFGGI. At 235-242 the chain is on the lumenal, vesicle side; the sequence is LYEFAGKR. The helical transmembrane segment at 243-263 threads the bilayer; it reads VPFLVLAAVSLFDALLLLAVA. Residues 264–289 are Cytoplasmic-facing; the sequence is KPFSAAARARANLPVGTPIHRLMLDP. Residues 290 to 310 traverse the membrane as a helical segment; the sequence is YIAVVAGALTTCNIPLAFLEP. Residues 311-325 lie on the Lumenal, vesicle side of the membrane; the sequence is TIATWMKHTMAASEW. Residues 326-346 form a helical membrane-spanning segment; sequence EMGMVWLPAFVPHVLGVYLTV. The Cytoplasmic segment spans residues 347 to 356; it reads RLAARYPHLQ. A helical transmembrane segment spans residues 357–377; that stretch reads WLYGALGLAVIGVSSCVVPAC. Residues 378 to 388 are Lumenal, vesicle-facing; the sequence is RSFAPLVVSLC. Residues 389 to 409 form a helical membrane-spanning segment; the sequence is GLCFGIALVDTALLPTLAFLV. At 410–422 the chain is on the cytoplasmic side; the sequence is DVRHVSVYGSVYA. Residues 423 to 443 form a helical membrane-spanning segment; the sequence is IADISYSVAYALGPIVAGHIV. Residues 444–447 lie on the Lumenal, vesicle side of the membrane; it reads HSLG. Residues 448 to 468 form a helical membrane-spanning segment; the sequence is FEQLSLGMGLANLLYAPVLLL. The Cytoplasmic portion of the chain corresponds to 469 to 530; that stretch reads LRNVGLLTRS…EDDYNYYSRS (62 aa). The mediates interaction with SEC14L1 stretch occupies residues 471 to 530; it reads NVGLLTRSRSERDVLLDEPPQGLYDAVRLREVQGKDGGEPCSPPGPFDGCEDDYNYYSRS. Residues 504 to 530 form a disordered region; the sequence is GKDGGEPCSPPGPFDGCEDDYNYYSRS.

This sequence belongs to the major facilitator superfamily. Vesicular transporter family. In terms of assembly, interacts with SEC14L1. In terms of tissue distribution, high expression in all major cholinergic cell groups, including peripheral postganglionic parasympathetic cells, preganglionic sympathetic and parasympathetic cells, ventral spinal cord and brainstem motoneurons, cell groups in the basal forebrain, the habenula and the corpus striatum. Weakly expressed in the cortex and hippocampus.

The protein resides in the cytoplasmic vesicle. It localises to the secretory vesicle. The protein localises to the synaptic vesicle membrane. The catalysed reaction is acetylcholine(out) + 2 H(+)(in) = acetylcholine(in) + 2 H(+)(out). The enzyme catalyses choline(in) + 2 H(+)(out) = choline(out) + 2 H(+)(in). It catalyses the reaction serotonin(in) + 2 H(+)(out) = serotonin(out) + 2 H(+)(in). With respect to regulation, potently inhibited by L-vesamicol. Electrogenic antiporter that exchanges one cholinergic neurotransmitter, acetylcholine or choline, with two intravesicular protons across the membrane of synaptic vesicles. Uses the electrochemical proton gradient established by the V-type proton-pump ATPase to store neurotransmitters inside the vesicles prior to their release via exocytosis. Determines cholinergic vesicular quantal size at presynaptic nerve terminals in developing neuro-muscular junctions with an impact on motor neuron differentiation and innervation pattern. Part of forebrain cholinergic system, regulates hippocampal synapse transmissions that underlie spatial memory formation. Can transport serotonin. The sequence is that of Vesicular acetylcholine transporter (Slc18a3) from Rattus norvegicus (Rat).